The following is a 122-amino-acid chain: Large ribosomal subunit protein uL14 (122 aa).

Belongs to the universal ribosomal protein uL14 family. As to quaternary structure, part of the 50S ribosomal subunit. Forms a cluster with proteins L3 and L19. In the 70S ribosome, L14 and L19 interact and together make contacts with the 16S rRNA in bridges B5 and B8.

In terms of biological role, binds to 23S rRNA. Forms part of two intersubunit bridges in the 70S ribosome. The protein is Large ribosomal subunit protein uL14 of Allorhizobium ampelinum (strain ATCC BAA-846 / DSM 112012 / S4) (Agrobacterium vitis (strain S4)).